The primary structure comprises 344 residues: Meiotic recombination protein DMC1 homolog A (344 aa).

Residue 133-140 coordinates ATP; the sequence is GEFRSGKT. Arg235 is a dsDNA binding site. SsDNA-binding residues include Arg235, Phe238, Arg241, Arg247, and Arg315. 2 residues coordinate dsDNA: Arg241 and Arg247.

Belongs to the RecA family. DMC1 subfamily. Expressed in meiotic young panicles.

Its subcellular location is the nucleus. Functionally, recombinase that may participate in meiotic recombination, specifically in homologous strand assimilation, which is required for the resolution of meiotic double-strand breaks. Exhibits DNA-dependent ATPase activity when bound to single-stranded DNA (ssDNA). Mediates renaturation of homologous complementary strands as well as assimilation of single strands into homologous supercoiled duplexes leading to D-loop formation. Binds circular single-stranded DNA (ssDNA) and circular double-stranded DNA (dsDNA) in vitro. Catalyzes DNA homologous renaturation and DNA strand exchange. The rates of these activities are dependent on the state of ATP hydrolysis. Forms helical filaments along ssDNA and dsDNA, and promotes strand exchange between ssDNA and dsDNA with long DNA substrates of several thousand base pairs. The presence of the replication protein A is not required for this activity. Seems to be required for homologous pairing and subsequent chromosome segregation during male meiosis. May be not directly required for homologous pairing during male meiosis. Required for synaptonemal complex assembly and crossover formation. Functions redundantly with DMC1B. The polypeptide is Meiotic recombination protein DMC1 homolog A (Oryza sativa subsp. japonica (Rice)).